We begin with the raw amino-acid sequence, 284 residues long: Non-selective voltage-gated ion channel VDAC3 (284 aa).

The residue at position 2 (cysteine 2) is an N-acetylcysteine. Residue threonine 4 is modified to Phosphothreonine. An N6-acetyllysine mark is found at lysine 12, lysine 15, and lysine 20. 2 beta stranded membrane passes run 26 to 35 and 39 to 48; these read MVKIDLKTKS and VMEFSTSGHA. Lysine 54 participates in a covalent cross-link: Glycyl lysine isopeptide (Lys-Gly) (interchain with G-Cter in ubiquitin). Transmembrane regions (beta stranded) follow at residues 55–65, 70–77, and 81–90; these read ASGNLETKYKV, LTFTQKWN, and TLGTEISWEN. Residue lysine 91 is modified to N6-acetyllysine. A beta stranded membrane pass occupies residues 96–105; sequence LKLTLDTIFV. Residues lysine 110 and lysine 111 each participate in a glycyl lysine isopeptide (Lys-Gly) (interchain with G-Cter in ubiquitin) cross-link. Beta stranded transmembrane passes span 112–121, 124–131, 138–146, 151–159, 164–176, 179–186, 190–199, 203–212, 219–228, and 232–239; these read SGKLKASYKR, FSVGSNVD, TIYGWAVLA, LAGYQMSFD, KLSQ…GYKA, FQLHTHVN, EFGGSIYQKV, IETSINLAWT, RFGIAAKYML, and TSLSAKVN. Serine 242 carries the post-translational modification Phosphoserine. NAD(+)-binding positions include 243–245 and 261–265; these read LIG and SALID. 2 beta stranded membrane-spanning segments follow: residues 243 to 252 and 255 to 264; these read LIGLGYTQTL and GVKLTLSALI. At lysine 267 the chain carries N6-acetyllysine; alternate. Residue lysine 267 forms a Glycyl lysine isopeptide (Lys-Gly) (interchain with G-Cter in ubiquitin); alternate linkage. Residues 274–283 form a beta stranded membrane-spanning segment; it reads HKVGLGFELE.

This sequence belongs to the eukaryotic mitochondrial porin family. As to quaternary structure, interacts with ARMC12 in a TBC1D21-dependent manner. Interacts with MISFA. Ubiquitinated by PRKN during mitophagy, leading to its degradation and enhancement of mitophagy. Deubiquitinated by USP30.

Its subcellular location is the mitochondrion outer membrane. The protein resides in the membrane. It carries out the reaction chloride(in) = chloride(out). It catalyses the reaction K(+)(in) = K(+)(out). Non-selective voltage-gated ion channel that mediates the transport of anions and cations through the mitochondrion outer membrane and plasma membrane. Forms a high-conducting channel with a stable open state and a voltage-induced closure with a mild preference for anions over cations. Involved in male fertility and sperm mitochondrial sheath formation. The chain is Non-selective voltage-gated ion channel VDAC3 from Pongo abelii (Sumatran orangutan).